Consider the following 176-residue polypeptide: Large ribosomal subunit protein uL6 (176 aa).

This sequence belongs to the universal ribosomal protein uL6 family. As to quaternary structure, part of the 50S ribosomal subunit.

Functionally, this protein binds to the 23S rRNA, and is important in its secondary structure. It is located near the subunit interface in the base of the L7/L12 stalk, and near the tRNA binding site of the peptidyltransferase center. The protein is Large ribosomal subunit protein uL6 of Methanospirillum hungatei JF-1 (strain ATCC 27890 / DSM 864 / NBRC 100397 / JF-1).